The primary structure comprises 255 residues: Endonuclease 8 2 (255 aa).

The active-site Schiff-base intermediate with DNA is Pro2. The Proton donor role is filled by Glu3. Residue Lys51 is the Proton donor; for beta-elimination activity of the active site. The DNA site is built by Gln67 and Asn164. The FPG-type zinc finger occupies 221–255 (WVYGRAGQGCRRCGTLIAYDTTDERVRYWCPACQR). Arg245 (proton donor; for delta-elimination activity) is an active-site residue.

It belongs to the FPG family. It depends on Zn(2+) as a cofactor.

The enzyme catalyses 2'-deoxyribonucleotide-(2'-deoxyribose 5'-phosphate)-2'-deoxyribonucleotide-DNA = a 3'-end 2'-deoxyribonucleotide-(2,3-dehydro-2,3-deoxyribose 5'-phosphate)-DNA + a 5'-end 5'-phospho-2'-deoxyribonucleoside-DNA + H(+). Its function is as follows. Involved in base excision repair of DNA damaged by oxidation or by mutagenic agents. Acts as a DNA glycosylase that recognizes and removes damaged bases. Has AP (apurinic/apyrimidinic) lyase activity and introduces nicks in the DNA strand. Cleaves the DNA backbone by beta-delta elimination to generate a single-strand break at the site of the removed base with both 3'- and 5'-phosphates. The polypeptide is Endonuclease 8 2 (nei2) (Mycobacterium bovis (strain ATCC BAA-935 / AF2122/97)).